The chain runs to 74 residues: U3-agatoxin-Ao1b (74 aa).

A signal peptide spans Met-1–Ala-20. Positions Ile-21–Arg-34 are excised as a propeptide. Cystine bridges form between Cys-37/Cys-53, Cys-44/Cys-58, Cys-52/Cys-68, and Cys-60/Cys-66. Serine amide is present on Ser-72.

This sequence belongs to the neurotoxin 07 (Beta/delta-agtx) family. 02 (aga-3) subfamily. As to expression, expressed by the venom gland.

It localises to the secreted. Insecticidal neurotoxin that induces an irreversible spastic paralysis when injected into insects. Modifies presynaptic voltage-gated sodium channels (Nav), causing them to open at the normal resting potential of the nerve. This leads to spontaneous release of neurotransmitter and repetitive action potentials in motor neurons. The sequence is that of U3-agatoxin-Ao1b from Agelena orientalis (Funnel-web spider).